Here is a 273-residue protein sequence, read N- to C-terminus: Zinc finger protein 80 (273 aa).

The C2H2-type 1 zinc-finger motif lies at 49 to 71 (YKCKECGSVFNKNSLLVRHQQIH). The segment at 77 to 99 (YEYQECGKAFPEKVDFVRHMRIH) adopts a C2H2-type 2; degenerate zinc-finger fold. Residues 105-127 (CKCVECRKVFNRRSHLLCYRQIH) form a C2H2-type 3; atypical zinc finger. 4 C2H2-type zinc fingers span residues 133-155 (YECSECGKTFSYHSVFIQHRVTH), 161-183 (FGCKECGKTFYYNSSLTRHMKIH), 187-211 (KPCKCSECGKTFTYHSVFFRHSMTH), and 217-239 (YECKECGKGFYYSYSLTRHTRSH).

It belongs to the krueppel C2H2-type zinc-finger protein family.

It is found in the nucleus. In terms of biological role, may be involved in transcriptional regulation. The protein is Zinc finger protein 80 (ZNF80) of Pan troglodytes (Chimpanzee).